The primary structure comprises 270 residues: Probable aquaporin NIP-type (270 aa).

2 helical membrane-spanning segments follow: residues 45–65 (LIAE…SVAV) and 72–92 (VTFP…VYTV). An NPA 1 motif is present at residues 101–103 (NPA). 3 helical membrane passes run 121–141 (LYII…ALLF), 160–180 (SLAI…GVAT), and 188–208 (VAGI…GPIS). The NPA 2 motif lies at 213 to 215 (NPA). The helical transmembrane segment at 231 to 251 (WVYVVGPIIGTLAGAFVYNLI) threads the bilayer.

It belongs to the MIP/aquaporin (TC 1.A.8) family. NIP (TC 1.A.8.12) subfamily. Pollen specific.

It localises to the membrane. In terms of biological role, aquaporins facilitate the transport of water and small neutral solutes across cell membranes. This chain is Probable aquaporin NIP-type, found in Nicotiana alata (Winged tobacco).